We begin with the raw amino-acid sequence, 296 residues long: 4-diphosphocytidyl-2-C-methyl-D-erythritol kinase (296 aa).

Residue K12 is part of the active site. Residue 94 to 104 (PAQAGMGGGSS) participates in ATP binding. The active site involves D136.

Belongs to the GHMP kinase family. IspE subfamily.

It catalyses the reaction 4-CDP-2-C-methyl-D-erythritol + ATP = 4-CDP-2-C-methyl-D-erythritol 2-phosphate + ADP + H(+). It participates in isoprenoid biosynthesis; isopentenyl diphosphate biosynthesis via DXP pathway; isopentenyl diphosphate from 1-deoxy-D-xylulose 5-phosphate: step 3/6. Its function is as follows. Catalyzes the phosphorylation of the position 2 hydroxy group of 4-diphosphocytidyl-2C-methyl-D-erythritol. In Variovorax paradoxus (strain S110), this protein is 4-diphosphocytidyl-2-C-methyl-D-erythritol kinase.